The primary structure comprises 370 residues: Lipoyl synthase, mitochondrial (370 aa).

The [4Fe-4S] cluster site is built by cysteine 104, cysteine 109, cysteine 115, cysteine 135, cysteine 139, cysteine 142, and serine 350. The 222-residue stretch at 118 to 339 folds into the Radical SAM core domain; it reads GGDKSKATAT…KQKALELGFL (222 aa).

This sequence belongs to the radical SAM superfamily. Lipoyl synthase family. Requires [4Fe-4S] cluster as cofactor.

The protein localises to the mitochondrion. It carries out the reaction [[Fe-S] cluster scaffold protein carrying a second [4Fe-4S](2+) cluster] + N(6)-octanoyl-L-lysyl-[protein] + 2 oxidized [2Fe-2S]-[ferredoxin] + 2 S-adenosyl-L-methionine + 4 H(+) = [[Fe-S] cluster scaffold protein] + N(6)-[(R)-dihydrolipoyl]-L-lysyl-[protein] + 4 Fe(3+) + 2 hydrogen sulfide + 2 5'-deoxyadenosine + 2 L-methionine + 2 reduced [2Fe-2S]-[ferredoxin]. It participates in protein modification; protein lipoylation via endogenous pathway; protein N(6)-(lipoyl)lysine from octanoyl-[acyl-carrier-protein]: step 2/2. Its function is as follows. Catalyzes the radical-mediated insertion of two sulfur atoms into the C-6 and C-8 positions of the octanoyl moiety bound to the lipoyl domains of lipoate-dependent enzymes, thereby converting the octanoylated domains into lipoylated derivatives. The protein is Lipoyl synthase, mitochondrial of Kluyveromyces lactis (strain ATCC 8585 / CBS 2359 / DSM 70799 / NBRC 1267 / NRRL Y-1140 / WM37) (Yeast).